The sequence spans 153 residues: Cytochrome c-type biogenesis protein CcmE (153 aa).

Over 1–8 the chain is Cytoplasmic; that stretch reads MTTRRGRR. The helical; Signal-anchor for type II membrane protein transmembrane segment at 9 to 29 threads the bilayer; it reads ALLIAGGVGLLALAAALVLNA. Topologically, residues 30-153 are periplasmic; it reads LRSNLVFFFS…PSATLQTEAR (124 aa). H124 and Y128 together coordinate heme.

This sequence belongs to the CcmE/CycJ family.

It is found in the cell inner membrane. Heme chaperone required for the biogenesis of c-type cytochromes. Transiently binds heme delivered by CcmC and transfers the heme to apo-cytochromes in a process facilitated by CcmF and CcmH. The protein is Cytochrome c-type biogenesis protein CcmE of Bordetella parapertussis (strain 12822 / ATCC BAA-587 / NCTC 13253).